Reading from the N-terminus, the 715-residue chain is Polyribonucleotide nucleotidyltransferase (715 aa).

Positions 493 and 499 each coordinate Mg(2+). Residues 560–619 (PRMITIKINPEKIRDVIGKGGSVIRALTEETGTTIDISDDGVVTIASTSSEGMAEAKKRI) form the KH domain. Residues 629–697 (GQVYEGTVLK…EKGRVRLSAK (69 aa)) enclose the S1 motif domain.

The protein belongs to the polyribonucleotide nucleotidyltransferase family. Mg(2+) is required as a cofactor.

The protein localises to the cytoplasm. It catalyses the reaction RNA(n+1) + phosphate = RNA(n) + a ribonucleoside 5'-diphosphate. In terms of biological role, involved in mRNA degradation. Catalyzes the phosphorolysis of single-stranded polyribonucleotides processively in the 3'- to 5'-direction. The protein is Polyribonucleotide nucleotidyltransferase of Burkholderia vietnamiensis (strain G4 / LMG 22486) (Burkholderia cepacia (strain R1808)).